Here is a 184-residue protein sequence, read N- to C-terminus: MDTQKIEAAVKMIIEAVGEDANREGLQETPARVARMYQEIFSGLGQTAEEHLSKSFEIIDDNMVVEKDIFFHTMCEHHFLPFYGRAHIAYIPDGRVAGLSKLARTVEVYSKKPQIQERLNIEVADALMDYLGAKGAFVVIEAEHMCMSMRGVRKPGTATLTTVARGLFETDKDLRDQAYRLMGL.

Residues cysteine 75, histidine 78, and cysteine 146 each coordinate Zn(2+).

The protein belongs to the GTP cyclohydrolase I family. Homomer.

The catalysed reaction is GTP + H2O = 7,8-dihydroneopterin 3'-triphosphate + formate + H(+). It functions in the pathway cofactor biosynthesis; 7,8-dihydroneopterin triphosphate biosynthesis; 7,8-dihydroneopterin triphosphate from GTP: step 1/1. This is GTP cyclohydrolase 1 from Streptococcus pneumoniae serotype 19F (strain G54).